Reading from the N-terminus, the 243-residue chain is UPF0502 protein H16_B1091 (243 aa).

The disordered stretch occupies residues 1–23 (MQSNHDSDASQAGDRPARPALRP).

The protein belongs to the UPF0502 family.

This Cupriavidus necator (strain ATCC 17699 / DSM 428 / KCTC 22496 / NCIMB 10442 / H16 / Stanier 337) (Ralstonia eutropha) protein is UPF0502 protein H16_B1091.